Here is a 165-residue protein sequence, read N- to C-terminus: Photosystem I assembly protein Ycf3 (165 aa).

TPR repeat units lie at residues 32–65 (AFTYYRDGMSAQSEGNYAEALQNYYEAMRLEIDP), 69–102 (SYILYNIGLIHTSNGEHTKALEYYFRALERNPFL), and 117–150 (GEQAIRQGDSEIAEAWFDQAAEYWKQALTLTPGN).

It belongs to the Ycf3 family.

The protein localises to the plastid. Its subcellular location is the chloroplast thylakoid membrane. In terms of biological role, essential for the assembly of the photosystem I (PSI) complex. May act as a chaperone-like factor to guide the assembly of the PSI subunits. The chain is Photosystem I assembly protein Ycf3 from Spinacia oleracea (Spinach).